Consider the following 298-residue polypeptide: ATP synthase gamma chain (298 aa).

It belongs to the ATPase gamma chain family. F-type ATPases have 2 components, CF(1) - the catalytic core - and CF(0) - the membrane proton channel. CF(1) has five subunits: alpha(3), beta(3), gamma(1), delta(1), epsilon(1). CF(0) has three main subunits: a, b and c.

It localises to the cell inner membrane. Its function is as follows. Produces ATP from ADP in the presence of a proton gradient across the membrane. The gamma chain is believed to be important in regulating ATPase activity and the flow of protons through the CF(0) complex. This chain is ATP synthase gamma chain, found in Albidiferax ferrireducens (strain ATCC BAA-621 / DSM 15236 / T118) (Rhodoferax ferrireducens).